The sequence spans 156 residues: Transcription elongation factor GreA (156 aa).

Positions 2-27 (EKTFPMTKEGLDKLKAELENLKLVKR) form a coiled coil.

This sequence belongs to the GreA/GreB family.

In terms of biological role, necessary for efficient RNA polymerase transcription elongation past template-encoded arresting sites. The arresting sites in DNA have the property of trapping a certain fraction of elongating RNA polymerases that pass through, resulting in locked ternary complexes. Cleavage of the nascent transcript by cleavage factors such as GreA or GreB allows the resumption of elongation from the new 3'terminus. GreA releases sequences of 2 to 3 nucleotides. The protein is Transcription elongation factor GreA of Lactococcus lactis subsp. cremoris (strain MG1363).